Reading from the N-terminus, the 494-residue chain is Nuclear distribution protein PAC1 (494 aa).

A LisH domain is found at 14–46; it reads QKNELDKSVLRYLNWNYKQTVRHEHAQDYESVR. The stretch at 90-123 forms a coiled coil; sequence NSIVRLQKKIIELEQNTETLVSQIKDLNTQVSEL. 7 WD repeats span residues 153–192, 196–244, 251–292, 295–334, 347–395, 415–454, and 457–492; these read NVES…IPLA, SHTK…CKFQ, GHEH…SLKT, PHSQ…SVGT, HFIE…LMAH, GHLS…HVWE, and HTGF…SNVF.

This sequence belongs to the WD repeat LIS1/nudF family. As to quaternary structure, self-associates. Interacts with NDL1 and dynein.

It localises to the cytoplasm. Its subcellular location is the cytoskeleton. It is found in the spindle pole. Positively regulates the activity of the minus-end directed microtubule motor protein dynein. Plays a central role in positioning the mitotic spindle at the bud neck during cell division. Targets cytoplasmic dynein to microtubule plus ends, thereby promoting dynein-mediated microtubule sliding along the bud cortex and consequently the movement of the mitotic spindle to the bud neck. The sequence is that of Nuclear distribution protein PAC1 from Saccharomyces cerevisiae (strain YJM789) (Baker's yeast).